Consider the following 217-residue polypeptide: Octanoyltransferase (217 aa).

The BPL/LPL catalytic domain maps to 32 to 207; it reads SDSPDELWIV…TLSQLLGYQQ (176 aa). Substrate-binding positions include 71–78, 138–140, and 151–153; these read RGGQVTYH, SLG, and GLA. Cys-169 (acyl-thioester intermediate) is an active-site residue.

It belongs to the LipB family.

The protein resides in the cytoplasm. The catalysed reaction is octanoyl-[ACP] + L-lysyl-[protein] = N(6)-octanoyl-L-lysyl-[protein] + holo-[ACP] + H(+). The protein operates within protein modification; protein lipoylation via endogenous pathway; protein N(6)-(lipoyl)lysine from octanoyl-[acyl-carrier-protein]: step 1/2. Functionally, catalyzes the transfer of endogenously produced octanoic acid from octanoyl-acyl-carrier-protein onto the lipoyl domains of lipoate-dependent enzymes. Lipoyl-ACP can also act as a substrate although octanoyl-ACP is likely to be the physiological substrate. This is Octanoyltransferase from Shewanella sp. (strain ANA-3).